The following is a 217-amino-acid chain: MKIFIDTANVEEIRKASELGVLSGVTTNPSLIAKEGRDLKEVVEEICSIVDGPISAEVISLEYEKMIEEGRELSKLHKNIVIKIPMCEEGLKAVSVLSKEGIKTNVTLIFSSMQALLAARAGATYVSPFLGRLDDIGNRGIEVVEQIADMFKIHEIKTEIIAASVRTPMHVLEAAMAGSHIATIPYKVIIQMSKHALTDIGIEKFMKDYEKAFGENK.

Residue Lys83 is the Schiff-base intermediate with substrate of the active site.

The protein belongs to the transaldolase family. Type 3B subfamily.

Its subcellular location is the cytoplasm. The enzyme catalyses D-sedoheptulose 7-phosphate + D-glyceraldehyde 3-phosphate = D-erythrose 4-phosphate + beta-D-fructose 6-phosphate. It participates in carbohydrate degradation; pentose phosphate pathway; D-glyceraldehyde 3-phosphate and beta-D-fructose 6-phosphate from D-ribose 5-phosphate and D-xylulose 5-phosphate (non-oxidative stage): step 2/3. Transaldolase is important for the balance of metabolites in the pentose-phosphate pathway. The sequence is that of Probable transaldolase from Clostridium botulinum (strain Okra / Type B1).